The following is a 416-amino-acid chain: Putative competence-damage inducible protein (416 aa).

It belongs to the CinA family.

This is Putative competence-damage inducible protein from Bacillus velezensis (strain DSM 23117 / BGSC 10A6 / LMG 26770 / FZB42) (Bacillus amyloliquefaciens subsp. plantarum).